The chain runs to 680 residues: Nodulation protein NolNO (680 aa).

Belongs to the NodU/CmcH family.

Its subcellular location is the cytoplasm. Its function is as follows. Involved in the O-carbamoylation of nod factors. The polypeptide is Nodulation protein NolNO (nolO) (Sinorhizobium fredii (strain NBRC 101917 / NGR234)).